A 278-amino-acid polypeptide reads, in one-letter code: Undecaprenyl-diphosphatase (278 aa).

The next 8 helical transmembrane spans lie at 3–23 (YILI…IPIS), 42–62 (VAYS…IIYF), 88–108 (FLVI…LFVI), 112–132 (ILGL…IIIY), 152–172 (IIIV…RSGI), 190–210 (LSFI…VLFS), 225–245 (GLLI…NALL), and 253–273 (VVVL…LSGI).

It belongs to the UppP family.

Its subcellular location is the cell membrane. The catalysed reaction is di-trans,octa-cis-undecaprenyl diphosphate + H2O = di-trans,octa-cis-undecaprenyl phosphate + phosphate + H(+). In terms of biological role, catalyzes the dephosphorylation of undecaprenyl diphosphate (UPP). This chain is Undecaprenyl-diphosphatase, found in Saccharolobus islandicus (strain M.14.25 / Kamchatka #1) (Sulfolobus islandicus).